The primary structure comprises 969 residues: RNA polymerase-associated protein RapA (969 aa).

One can recognise a Helicase ATP-binding domain in the interval 164-334 (EVGRRHAPRV…FARLRLLDPD (171 aa)). 177 to 184 (DEVGLGKT) provides a ligand contact to ATP. A DEAH box motif is present at residues 280 to 283 (DEAH). The Helicase C-terminal domain occupies 492 to 679 (RVNWLIEKIQ…ESAKLNQSLK (188 aa)).

This sequence belongs to the SNF2/RAD54 helicase family. RapA subfamily. As to quaternary structure, interacts with the RNAP. Has a higher affinity for the core RNAP than for the holoenzyme. Its ATPase activity is stimulated by binding to RNAP.

In terms of biological role, transcription regulator that activates transcription by stimulating RNA polymerase (RNAP) recycling in case of stress conditions such as supercoiled DNA or high salt concentrations. Probably acts by releasing the RNAP, when it is trapped or immobilized on tightly supercoiled DNA. Does not activate transcription on linear DNA. Probably not involved in DNA repair. The polypeptide is RNA polymerase-associated protein RapA (Vibrio atlanticus (strain LGP32) (Vibrio splendidus (strain Mel32))).